Reading from the N-terminus, the 261-residue chain is Thiamine thiazole synthase (261 aa).

NAD(+) is bound by residues S40, 59-60, G67, V133, and 159-161; these read ER and HID. The Fe cation site is built by D161 and H176. Positions 179 and 226 each coordinate NAD(+). Glycine is bound at residue R236.

This sequence belongs to the THI4 family. In terms of assembly, homooctamer; tetramer of dimers. The cofactor is Fe(2+).

It catalyses the reaction hydrogen sulfide + glycine + NAD(+) = ADP-5-ethyl-4-methylthiazole-2-carboxylate + nicotinamide + 3 H2O + H(+). It functions in the pathway cofactor biosynthesis; thiamine diphosphate biosynthesis. Its function is as follows. Involved in the biosynthesis of the thiazole moiety of thiamine. Catalyzes the conversion of NAD and glycine to adenosine diphosphate 5-(2-hydroxyethyl)-4-methylthiazole-2-carboxylate (ADT), an adenylated thiazole intermediate, using free sulfide as a source of sulfur. The chain is Thiamine thiazole synthase from Methanococcus maripaludis (strain C6 / ATCC BAA-1332).